Consider the following 247-residue polypeptide: ATP synthase delta chain, chloroplastic (247 aa).

A chloroplast-targeting transit peptide spans 1–60 (MAALRLASFTLRPAAAAAASASSGATPAAPRSASFARAARGLPSLRLAPPRRRGDLVRPR).

It belongs to the ATPase delta chain family. In terms of assembly, F-type ATPases have 2 components, CF(1) - the catalytic core - and CF(0) - the membrane proton channel. CF(1) has five subunits: alpha(3), beta(3), gamma(1), delta(1), epsilon(1). CF(0) has three main subunits: a, b and c.

It is found in the plastid. The protein localises to the chloroplast thylakoid membrane. Functionally, this protein seems to be part of the stalk that links CF(0) to CF(1). It either transmits conformational changes from CF(0) into CF(1) or is implicated in proton conduction. This chain is ATP synthase delta chain, chloroplastic (ATPD), found in Sorghum bicolor (Sorghum).